The primary structure comprises 304 residues: Methionyl-tRNA formyltransferase (304 aa).

110 to 113 provides a ligand contact to (6S)-5,6,7,8-tetrahydrofolate; it reads SLLP.

This sequence belongs to the Fmt family.

The catalysed reaction is L-methionyl-tRNA(fMet) + (6R)-10-formyltetrahydrofolate = N-formyl-L-methionyl-tRNA(fMet) + (6S)-5,6,7,8-tetrahydrofolate + H(+). Functionally, attaches a formyl group to the free amino group of methionyl-tRNA(fMet). The formyl group appears to play a dual role in the initiator identity of N-formylmethionyl-tRNA by promoting its recognition by IF2 and preventing the misappropriation of this tRNA by the elongation apparatus. The protein is Methionyl-tRNA formyltransferase of Gluconobacter oxydans (strain 621H) (Gluconobacter suboxydans).